The primary structure comprises 335 residues: Protein PXR1 (335 aa).

One can recognise a G-patch domain in the interval 25–71 (KSRFGHKYLEKLGWEPGKGLGHASHAMSTHIKVTIKDDTMGLGAKLK). The tract at residues 155-310 (DDAEDAKVSG…PPTISTRLSV (156 aa)) is disordered. Basic residues predominate over residues 163–175 (SGKHRDRKSRAKR). Over residues 183 to 209 (LKEKCRDIDRTRKSKRKEKEQEKEKNR) the composition is skewed to basic and acidic residues. Basic residues predominate over residues 226–257 (KKDKKDKKEKKEKKEKKEKKEKKHKEKSNKRL).

This sequence belongs to the PINX1 family.

It is found in the nucleus. The protein resides in the nucleolus. In terms of biological role, involved in rRNA-processing at A0, A1 and A2 sites and negatively regulates telomerase. This is Protein PXR1 (PXR1) from Eremothecium gossypii (strain ATCC 10895 / CBS 109.51 / FGSC 9923 / NRRL Y-1056) (Yeast).